Reading from the N-terminus, the 315-residue chain is Acetyl-coenzyme A carboxylase carboxyl transferase subunit alpha (315 aa).

The CoA carboxyltransferase C-terminal domain maps to 40-293 (LEDKKIALTK…KKNVLAALDR (254 aa)).

Belongs to the AccA family. Acetyl-CoA carboxylase is a heterohexamer composed of biotin carboxyl carrier protein (AccB), biotin carboxylase (AccC) and two subunits each of ACCase subunit alpha (AccA) and ACCase subunit beta (AccD).

It is found in the cytoplasm. The catalysed reaction is N(6)-carboxybiotinyl-L-lysyl-[protein] + acetyl-CoA = N(6)-biotinyl-L-lysyl-[protein] + malonyl-CoA. Its pathway is lipid metabolism; malonyl-CoA biosynthesis; malonyl-CoA from acetyl-CoA: step 1/1. In terms of biological role, component of the acetyl coenzyme A carboxylase (ACC) complex. First, biotin carboxylase catalyzes the carboxylation of biotin on its carrier protein (BCCP) and then the CO(2) group is transferred by the carboxyltransferase to acetyl-CoA to form malonyl-CoA. The protein is Acetyl-coenzyme A carboxylase carboxyl transferase subunit alpha of Marinomonas sp. (strain MWYL1).